Consider the following 45-residue polypeptide: Large ribosomal subunit protein bL34 (45 aa).

The disordered stretch occupies residues Met-1–Val-45. Positions Ser-10–Val-45 are enriched in basic residues.

It belongs to the bacterial ribosomal protein bL34 family.

This Parasynechococcus marenigrum (strain WH8102) protein is Large ribosomal subunit protein bL34.